Here is a 499-residue protein sequence, read N- to C-terminus: Glycerol kinase (499 aa).

Residue T12 coordinates ADP. ATP is bound by residues T12, T13, and S14. T12 is a sn-glycerol 3-phosphate binding site. Position 16 (R16) interacts with ADP. Sn-glycerol 3-phosphate is bound by residues R82, E83, Y135, and D245. Residues R82, E83, Y135, D245, and Q246 each contribute to the glycerol site. The ADP site is built by T267 and G310. Residues T267, G310, Q314, and G411 each contribute to the ATP site. ADP is bound by residues G411 and N415.

Belongs to the FGGY kinase family. In terms of assembly, homotetramer and homodimer (in equilibrium).

It carries out the reaction glycerol + ATP = sn-glycerol 3-phosphate + ADP + H(+). It participates in polyol metabolism; glycerol degradation via glycerol kinase pathway; sn-glycerol 3-phosphate from glycerol: step 1/1. Activated by phosphorylation and inhibited by fructose 1,6-bisphosphate (FBP). In terms of biological role, key enzyme in the regulation of glycerol uptake and metabolism. Catalyzes the phosphorylation of glycerol to yield sn-glycerol 3-phosphate. The polypeptide is Glycerol kinase (Clostridium beijerinckii (strain ATCC 51743 / NCIMB 8052) (Clostridium acetobutylicum)).